The following is a 740-amino-acid chain: 1,4-alpha-glucan branching enzyme GlgB (740 aa).

Residue Asp419 is the Nucleophile of the active site. Glu472 (proton donor) is an active-site residue.

The protein belongs to the glycosyl hydrolase 13 family. GlgB subfamily. As to quaternary structure, monomer.

The enzyme catalyses Transfers a segment of a (1-&gt;4)-alpha-D-glucan chain to a primary hydroxy group in a similar glucan chain.. It participates in glycan biosynthesis; glycogen biosynthesis. Functionally, catalyzes the formation of the alpha-1,6-glucosidic linkages in glycogen by scission of a 1,4-alpha-linked oligosaccharide from growing alpha-1,4-glucan chains and the subsequent attachment of the oligosaccharide to the alpha-1,6 position. The protein is 1,4-alpha-glucan branching enzyme GlgB of Paramagnetospirillum magneticum (strain ATCC 700264 / AMB-1) (Magnetospirillum magneticum).